A 153-amino-acid chain; its full sequence is NAD(P)H-quinone oxidoreductase subunit N (153 aa).

It belongs to the complex I NdhN subunit family. NDH-1 can be composed of about 15 different subunits; different subcomplexes with different compositions have been identified which probably have different functions.

The protein resides in the cellular thylakoid membrane. The catalysed reaction is a plastoquinone + NADH + (n+1) H(+)(in) = a plastoquinol + NAD(+) + n H(+)(out). It catalyses the reaction a plastoquinone + NADPH + (n+1) H(+)(in) = a plastoquinol + NADP(+) + n H(+)(out). Its function is as follows. NDH-1 shuttles electrons from an unknown electron donor, via FMN and iron-sulfur (Fe-S) centers, to quinones in the respiratory and/or the photosynthetic chain. The immediate electron acceptor for the enzyme in this species is believed to be plastoquinone. Couples the redox reaction to proton translocation, and thus conserves the redox energy in a proton gradient. Cyanobacterial NDH-1 also plays a role in inorganic carbon-concentration. This Prochlorococcus marinus (strain MIT 9303) protein is NAD(P)H-quinone oxidoreductase subunit N.